The following is a 394-amino-acid chain: Acid ceramidase (394 aa).

A signal peptide spans 1 to 20 (MLGRSLLTWVLAAAVTCAQA). Residues Cys-30 and Cys-339 are joined by a disulfide bond. Cys-142 acts as the Nucleophile in catalysis. N-linked (GlcNAc...) asparagine glycans are attached at residues Asn-194, Asn-258, Asn-285, and Asn-341. Cys-387 and Cys-391 form a disulfide bridge.

This sequence belongs to the acid ceramidase family. As to quaternary structure, heterodimer; disulfide-linked. The heterodimer is composed of the disulfide-linked alpha and beta chains produced by autocatalytic cleavage of the precursor. N-glycosylated. In terms of processing, proteolytically cleaved into two chains alpha and beta that remain associated via a disulfide bond. Cleavage gives rise to a conformation change that activates the enzyme. The same catalytic Cys residue mediates the autoproteolytic cleavage and subsequent hydrolysis of lipid substrates. The beta chain may undergo an additional C-terminal processing.

The protein localises to the lysosome. Its subcellular location is the secreted. The enzyme catalyses an N-acylsphing-4-enine + H2O = sphing-4-enine + a fatty acid. It carries out the reaction N-dodecanoylsphing-4-enine + H2O = dodecanoate + sphing-4-enine. The catalysed reaction is N-tetradecanoylsphing-4-enine + H2O = tetradecanoate + sphing-4-enine. It catalyses the reaction N-hexadecanoylsphing-4-enine + H2O = sphing-4-enine + hexadecanoate. The enzyme catalyses N-octadecanoylsphing-4-enine + H2O = sphing-4-enine + octadecanoate. It carries out the reaction N-dodecanoyl-(4R)-hydroxysphinganine + H2O = (4R)-hydroxysphinganine + dodecanoate. The catalysed reaction is N-(dodecanoyl)-sphinganine + H2O = dodecanoate + sphinganine. It catalyses the reaction N-(acetyl)-sphing-4-enine + H2O = sphing-4-enine + acetate. The enzyme catalyses N-(hexanoyl)sphing-4-enine + H2O = hexanoate + sphing-4-enine. It carries out the reaction N-octanoylsphing-4-enine + H2O = octanoate + sphing-4-enine. The catalysed reaction is N-(9Z-octadecenoyl)-sphing-4-enine + H2O = sphing-4-enine + (9Z)-octadecenoate. It catalyses the reaction N-dodecanoylethanolamine + H2O = dodecanoate + ethanolamine. It functions in the pathway lipid metabolism; sphingolipid metabolism. Functionally, lysosomal ceramidase that hydrolyzes sphingolipid ceramides into sphingosine and free fatty acids at acidic pH. Ceramides, sphingosine, and its phosphorylated form sphingosine-1-phosphate are bioactive lipids that mediate cellular signaling pathways regulating several biological processes including cell proliferation, apoptosis and differentiation. Has a higher catalytic efficiency towards C12-ceramides versus other ceramides. Also catalyzes the reverse reaction allowing the synthesis of ceramides from fatty acids and sphingosine. For the reverse synthetic reaction, the natural sphingosine D-erythro isomer is more efficiently utilized as a substrate compared to D-erythro-dihydrosphingosine and D-erythro-phytosphingosine, while the fatty acids with chain lengths of 12 or 14 carbons are the most efficiently used. Also has an N-acylethanolamine hydrolase activity. By regulating the levels of ceramides, sphingosine and sphingosine-1-phosphate in the epidermis, mediates the calcium-induced differentiation of epidermal keratinocytes. Also indirectly regulates tumor necrosis factor/TNF-induced apoptosis. By regulating the intracellular balance between ceramides and sphingosine, in adrenocortical cells, probably also acts as a regulator of steroidogenesis. The sequence is that of Acid ceramidase from Rattus norvegicus (Rat).